A 294-amino-acid chain; its full sequence is MRTGCEPTRFGNEAKTIIHGDALAELKKIPAESVDLIFADPPYNIGKNFDGLIEAWKEDLFIDWLFEVIAECHRVLKKQGSMYIMNSTENMPFIDLQCRKLFTIKSRIVWSYDSSGVQAKKHYGSMYEPILMMVKDAKNYTFNGDAILVEAKTGSQRALIDYRKNPPQPYNHQKVPGNVWDFPRVRYLMDEYENHPTQKPEALLKRIILASSNPGDIVLDPFAGSFTTGAVAIASGRKFIGIEINSEYIKMGLRRLDVASHYSAEELAKVKKRKTGNLSKRSRLSEVDPDLITK.

The interval 275–294 (TGNLSKRSRLSEVDPDLITK) is disordered. Basic and acidic residues predominate over residues 283–294 (RLSEVDPDLITK).

Belongs to the N(4)/N(6)-methyltransferase family.

The catalysed reaction is a 2'-deoxyadenosine in DNA + S-adenosyl-L-methionine = an N(6)-methyl-2'-deoxyadenosine in DNA + S-adenosyl-L-homocysteine + H(+). In terms of biological role, a beta subtype methylase, recognizes the double-stranded sequence 5'-ATGCAT-3' and methylates A-5. In Escherichia coli (strain K12), this protein is DNA adenine methyltransferase YhdJ (yhdJ).